The sequence spans 361 residues: Large ribosomal subunit protein uL3 (361 aa).

Residues 1–14 (MGRGGRRNPGRPRR) are compositionally biased toward basic residues. 2 disordered regions span residues 1–33 (MGRGGRRNPGRPRRGSLAFSPRKRASRPVPRIR) and 337–361 (TSQQGVRPKASEDEIVEQLGGPASA).

This sequence belongs to the universal ribosomal protein uL3 family. In terms of assembly, part of the 50S ribosomal subunit. Forms a cluster with proteins L14 and L24e.

In terms of biological role, one of the primary rRNA binding proteins, it binds directly near the 3'-end of the 23S rRNA, where it nucleates assembly of the 50S subunit. This chain is Large ribosomal subunit protein uL3, found in Methanopyrus kandleri (strain AV19 / DSM 6324 / JCM 9639 / NBRC 100938).